Here is a 236-residue protein sequence, read N- to C-terminus: UPF0257 lipoprotein YnfC (236 aa).

Residues 1–16 (MKYKLLPCLLAIFLTG) form the signal peptide. A lipid anchor (N-palmitoyl cysteine) is attached at Cys17. Cys17 carries the S-diacylglycerol cysteine lipid modification.

This sequence belongs to the UPF0257 family.

Its subcellular location is the cell membrane. The sequence is that of UPF0257 lipoprotein YnfC (ynfC) from Shigella flexneri.